The primary structure comprises 123 residues: UPF0102 protein Psyr_4114 (123 aa).

This sequence belongs to the UPF0102 family.

The sequence is that of UPF0102 protein Psyr_4114 from Pseudomonas syringae pv. syringae (strain B728a).